The sequence spans 389 residues: Chorismate synthase (389 aa).

NADP(+)-binding residues include Arg39 and Arg45. FMN is bound by residues 130–132 (RSS), 251–252 (NA), Gly296, 311–315 (KPIPT), and Arg338.

It belongs to the chorismate synthase family. As to quaternary structure, homotetramer. Requires FMNH2 as cofactor.

The catalysed reaction is 5-O-(1-carboxyvinyl)-3-phosphoshikimate = chorismate + phosphate. The protein operates within metabolic intermediate biosynthesis; chorismate biosynthesis; chorismate from D-erythrose 4-phosphate and phosphoenolpyruvate: step 7/7. Catalyzes the anti-1,4-elimination of the C-3 phosphate and the C-6 proR hydrogen from 5-enolpyruvylshikimate-3-phosphate (EPSP) to yield chorismate, which is the branch point compound that serves as the starting substrate for the three terminal pathways of aromatic amino acid biosynthesis. This reaction introduces a second double bond into the aromatic ring system. The polypeptide is Chorismate synthase (Oceanobacillus iheyensis (strain DSM 14371 / CIP 107618 / JCM 11309 / KCTC 3954 / HTE831)).